The chain runs to 1362 residues: Insulin receptor (1362 aa).

The signal sequence occupies residues 1–37; the sequence is MGQGVLRGEGHPNNNPNSKVGWKSLVGIITIFMLILC. The tract at residues 38-184 is leucine-rich region; the sequence is DQSDGKICYS…DSVEDNYIEL (147 aa). Cysteine 45 and cysteine 63 are joined by a disulfide. Asparagine 53, asparagine 115, and asparagine 148 each carry an N-linked (GlcNAc...) asparagine glycan. 14 cysteine pairs are disulfide-bonded: cysteine 163–cysteine 192, cysteine 196–cysteine 219, cysteine 206–cysteine 225, cysteine 229–cysteine 238, cysteine 233–cysteine 244, cysteine 245–cysteine 253, cysteine 249–cysteine 262, cysteine 265–cysteine 274, cysteine 278–cysteine 290, cysteine 296–cysteine 321, cysteine 303–cysteine 311, cysteine 325–cysteine 338, cysteine 341–cysteine 345, and cysteine 349–cysteine 370. An N-linked (GlcNAc...) asparagine glycan is attached at asparagine 332. Asparagine 374, asparagine 434, and asparagine 455 each carry an N-linked (GlcNAc...) asparagine glycan. A disulfide bridge connects residues cysteine 472 and cysteine 505. 2 consecutive Fibronectin type-III domains span residues 508–629 and 633–730; these read NLLT…TNET and VPLD…IQKE. N-linked (GlcNAc...) asparagine glycosylation is found at asparagine 551, asparagine 627, asparagine 642, asparagine 660, and asparagine 707. Cystine bridges form between cysteine 683–cysteine 896 and cysteine 822–cysteine 830. Residues 694–714 are disordered; sequence WTPPTEIDENGNENQTEHTSV. Over residues 705 to 714 the composition is skewed to polar residues; that stretch reads NENQTEHTSV. The interval 741–749 is insulin-binding; sequence ENYLHNEVF. Topologically, residues 759-951 are extracellular; that stretch reads DLFGVANGTL…PDHPHSNIVK (193 aa). N-linked (GlcNAc...) asparagine glycans are attached at residues asparagine 765 and asparagine 779. The Fibronectin type-III 3 domain occupies 849 to 944; sequence VVGPITYEYV…EQAYFQVPDH (96 aa). Residues asparagine 917 and asparagine 930 are each glycosylated (N-linked (GlcNAc...) asparagine). A helical membrane pass occupies residues 952–972; that stretch reads IITGPIIAVFLLLIVLVYCVV. The Cytoplasmic segment spans residues 973–1362; it reads QKKKDAEGPA…ILSLPRSSPS (390 aa). Tyrosine 993 is modified (phosphotyrosine; by autocatalysis). The Protein kinase domain occupies 1012–1287; that stretch reads INLLRELGQG…MLKDDLRPSF (276 aa). ATP is bound by residues serine 1022, lysine 1046, and 1093 to 1099; that span reads ELMAHGD. Aspartate 1148 (proton donor/acceptor) is an active-site residue. Residues 1152-1153 and aspartate 1166 contribute to the ATP site; that span reads RN. A phosphotyrosine; by autocatalysis mark is found at tyrosine 1174, tyrosine 1178, tyrosine 1179, tyrosine 1335, and tyrosine 1341.

The protein belongs to the protein kinase superfamily. Tyr protein kinase family. Insulin receptor subfamily. As to quaternary structure, tetramer of 2 alpha and 2 beta chains linked by disulfide bonds. The alpha chains contribute to the formation of the ligand-binding domain, while the beta chains carry the kinase domain. In terms of processing, autophosphorylated on tyrosine residues in response to insulin. Localized mainly to the envelope in oocytes. Localized to the animal hemisphere during early embryonic cleavage. Expressed during organogenesis in regions of ecto- and mesodermic origins. Expressed in the entire encephalon, the otic and optic vesicles, the gills, the somites and the pronephric tubules of the embryo. Also found in adult liver, muscle and regenerated forelimbs.

It is found in the cell membrane. The catalysed reaction is L-tyrosyl-[protein] + ATP = O-phospho-L-tyrosyl-[protein] + ADP + H(+). Autophosphorylation activates the kinase activity. In terms of biological role, receptor tyrosine kinase which mediates actions of insulin. May be required for forelimb regeneration. The protein is Insulin receptor (insr) of Xenopus laevis (African clawed frog).